Here is a 259-residue protein sequence, read N- to C-terminus: Deoxyribose-phosphate aldolase (259 aa).

Asp-101 serves as the catalytic Proton donor/acceptor. Lys-166 functions as the Schiff-base intermediate with acetaldehyde in the catalytic mechanism. Residue Lys-200 is the Proton donor/acceptor of the active site.

The protein belongs to the DeoC/FbaB aldolase family. DeoC type 2 subfamily.

The protein resides in the cytoplasm. It catalyses the reaction 2-deoxy-D-ribose 5-phosphate = D-glyceraldehyde 3-phosphate + acetaldehyde. It participates in carbohydrate degradation; 2-deoxy-D-ribose 1-phosphate degradation; D-glyceraldehyde 3-phosphate and acetaldehyde from 2-deoxy-alpha-D-ribose 1-phosphate: step 2/2. Functionally, catalyzes a reversible aldol reaction between acetaldehyde and D-glyceraldehyde 3-phosphate to generate 2-deoxy-D-ribose 5-phosphate. The polypeptide is Deoxyribose-phosphate aldolase (Glaesserella parasuis serovar 5 (strain SH0165) (Haemophilus parasuis)).